A 710-amino-acid chain; its full sequence is uncharacterized protein (710 aa).

The disordered stretch occupies residues 1–40 (MSESDGAFKSPSLPPSHHAPAPMSPEKIRAPAEQMDGPVE). A compositionally biased stretch (low complexity) spans 15 to 25 (PSHHAPAPMSP). One can recognise an FHA domain in the interval 108–165 (VVIGRIKPGCDLLMEHPSISRYHCILQYGNDKMSKTGKGWHIFELGSTHGSRMNKKRL). Coiled-coil stretches lie at residues 206–240 (TEMK…KEEE), 409–440 (ETDT…LSAG), and 471–502 (AKTK…KIAK). The interval 230-250 (IDDEKREKEEEGCGWGMDYGE) is disordered. Disordered regions lie at residues 535–560 (EIDQ…APTS), 591–619 (KNSL…AFGS), and 671–710 (EDYG…AGRY). Polar residues predominate over residues 538-560 (QTPSQGPGPSTSATLPATVAPTS). Positions 613 to 661 (QKEAFGSKVQKRVAQWEEELEAEKEELAKKQKLEAEEEAKKKVQRVRRR) form a coiled coil.

This is an uncharacterized protein from Caenorhabditis elegans.